Consider the following 378-residue polypeptide: Ribosomal RNA large subunit methyltransferase G (378 aa).

This sequence belongs to the methyltransferase superfamily. RlmG family.

It is found in the cytoplasm. It catalyses the reaction guanosine(1835) in 23S rRNA + S-adenosyl-L-methionine = N(2)-methylguanosine(1835) in 23S rRNA + S-adenosyl-L-homocysteine + H(+). Its function is as follows. Specifically methylates the guanine in position 1835 (m2G1835) of 23S rRNA. In Escherichia coli (strain ATCC 8739 / DSM 1576 / NBRC 3972 / NCIMB 8545 / WDCM 00012 / Crooks), this protein is Ribosomal RNA large subunit methyltransferase G.